Here is an 814-residue protein sequence, read N- to C-terminus: Immunoglobulin superfamily DCC subclass member 3 (814 aa).

Positions 1–35 are cleaved as a signal peptide; the sequence is MAVQRAASPRRPPAPLWPRLLLPLLLLLLPAPSEG. 4 consecutive Ig-like C2-type domains span residues 36 to 139, 140 to 220, 238 to 321, and 329 to 416; these read LGHS…ATMS, DFHV…IRIS, PAIL…RTAQ, and PAEF…ARLT. Disulfide bonds link C63–C117 and C160–C209. N93 is a glycosylation site (N-linked (GlcNAc...) asparagine). Residue N246 is glycosylated (N-linked (GlcNAc...) asparagine). Disulfide bonds link C259–C307 and C351–C400. N-linked (GlcNAc...) asparagine glycans are attached at residues N381 and N382. Fibronectin type-III domains follow at residues 426–520 and 523–618; these read PPRN…TLGE and APPP…ASER. N-linked (GlcNAc...) asparagine glycans are attached at residues N580, N604, and N634. Residues 641 to 661 form a helical membrane-spanning segment; the sequence is IVIGIHIGVTCIIFCVLFLLF. Disordered stretches follow at residues 722–743 and 762–814; these read PPAS…APAP and GKTT…HSEQ. Over residues 770–781 the composition is skewed to low complexity; the sequence is TEATAPCAGLAA.

Belongs to the immunoglobulin superfamily. DCC family.

Its subcellular location is the membrane. This chain is Immunoglobulin superfamily DCC subclass member 3 (IGDCC3), found in Homo sapiens (Human).